A 440-amino-acid chain; its full sequence is Transposon Ty1-GR2 Gag polyprotein (440 aa).

The span at 1–16 (MESQQLSQHSHISHGS) shows a compositional bias: low complexity. Disordered regions lie at residues 1-93 (MESQ…MMTQ), 126-173 (PQSQ…RPPP), and 352-440 (GSRN…PGTY). Composition is skewed to polar residues over residues 48 to 60 (TKANSQQTTTPAS) and 127 to 152 (QSQFPQYPSSVGTPLSTPSPESGNTF). The span at 153-165 (TDSSSADSDMTST) shows a compositional bias: low complexity. The interval 299–401 (NNGIHINNKV…NSKSKTARAH (103 aa)) is RNA-binding. Residues 402 to 418 (NVSTSNNSPSTDNDSIS) show a composition bias toward low complexity. The residue at position 416 (Ser-416) is a Phosphoserine. The segment covering 419 to 428 (KSTTEPIQLN) has biased composition (polar residues). The span at 429 to 440 (NKHDLHLRPGTY) shows a compositional bias: basic and acidic residues.

As to quaternary structure, homotrimer.

The protein localises to the cytoplasm. Capsid protein (CA) is the structural component of the virus-like particle (VLP), forming the shell that encapsulates the retrotransposons dimeric RNA genome. The particles are assembled from trimer-clustered units and there are holes in the capsid shells that allow for the diffusion of macromolecules. CA also has nucleocapsid-like chaperone activity, promoting primer tRNA(i)-Met annealing to the multipartite primer-binding site (PBS), dimerization of Ty1 RNA and initiation of reverse transcription. This is Transposon Ty1-GR2 Gag polyprotein (TY1A-GR2) from Saccharomyces cerevisiae (strain ATCC 204508 / S288c) (Baker's yeast).